Here is a 612-residue protein sequence, read N- to C-terminus: Dihydroxy-acid dehydratase (612 aa).

Asp-81 provides a ligand contact to Mg(2+). Cys-122 serves as a coordination point for [2Fe-2S] cluster. Positions 123 and 124 each coordinate Mg(2+). Residue Lys-124 is modified to N6-carboxylysine. Cys-195 contacts [2Fe-2S] cluster. Glu-491 is a Mg(2+) binding site. The Proton acceptor role is filled by Ser-517.

It belongs to the IlvD/Edd family. Homodimer. [2Fe-2S] cluster is required as a cofactor. The cofactor is Mg(2+).

It carries out the reaction (2R)-2,3-dihydroxy-3-methylbutanoate = 3-methyl-2-oxobutanoate + H2O. The catalysed reaction is (2R,3R)-2,3-dihydroxy-3-methylpentanoate = (S)-3-methyl-2-oxopentanoate + H2O. The protein operates within amino-acid biosynthesis; L-isoleucine biosynthesis; L-isoleucine from 2-oxobutanoate: step 3/4. It participates in amino-acid biosynthesis; L-valine biosynthesis; L-valine from pyruvate: step 3/4. Its function is as follows. Functions in the biosynthesis of branched-chain amino acids. Catalyzes the dehydration of (2R,3R)-2,3-dihydroxy-3-methylpentanoate (2,3-dihydroxy-3-methylvalerate) into 2-oxo-3-methylpentanoate (2-oxo-3-methylvalerate) and of (2R)-2,3-dihydroxy-3-methylbutanoate (2,3-dihydroxyisovalerate) into 2-oxo-3-methylbutanoate (2-oxoisovalerate), the penultimate precursor to L-isoleucine and L-valine, respectively. In Rhizobium rhizogenes (strain K84 / ATCC BAA-868) (Agrobacterium radiobacter), this protein is Dihydroxy-acid dehydratase.